The following is a 325-amino-acid chain: Elongation factor P--(R)-beta-lysine ligase (325 aa).

76 to 78 is a binding site for substrate; sequence SPE. ATP-binding positions include 100–102 and asparagine 109; that span reads RNE. Position 118 (tyrosine 118) interacts with substrate. ATP is bound at residue 244-245; the sequence is EL. A substrate-binding site is contributed by glutamate 251. Glycine 300 contributes to the ATP binding site.

It belongs to the class-II aminoacyl-tRNA synthetase family. EpmA subfamily. In terms of assembly, homodimer.

The catalysed reaction is D-beta-lysine + L-lysyl-[protein] + ATP = N(6)-((3R)-3,6-diaminohexanoyl)-L-lysyl-[protein] + AMP + diphosphate + H(+). In terms of biological role, with EpmB is involved in the beta-lysylation step of the post-translational modification of translation elongation factor P (EF-P). Catalyzes the ATP-dependent activation of (R)-beta-lysine produced by EpmB, forming a lysyl-adenylate, from which the beta-lysyl moiety is then transferred to the epsilon-amino group of a conserved specific lysine residue in EF-P. The sequence is that of Elongation factor P--(R)-beta-lysine ligase from Pectobacterium atrosepticum (strain SCRI 1043 / ATCC BAA-672) (Erwinia carotovora subsp. atroseptica).